Reading from the N-terminus, the 265-residue chain is MSSDGEEGSFEGSQLVSQSPSINSQTYAIPIPEGMLDQLDISSSSSSAGGRDDEDEEDDDADVDVGVGSECLVGVTGQDRLIIGSGDDSDNGDGDEVHDNAHATSDVSSTAELNHVCSEETEDMDNVDEGLLDDIMNNTGGGGFVNGFEFHESEPMFDVSKYVFETLIQAINSADFSESLAFQTKTSAVINAKSLELKQLINMSKDRLVDLQDKFEKGVQTSNRIKRNLKMSREKIQFLNDEFRTNYPIEFNQARDKIIERTIDS.

2 disordered regions span residues 1-63 and 79-111; these read MSSD…DADV and DRLI…SSTA. Over residues 14–27 the composition is skewed to polar residues; it reads QLVSQSPSINSQTY. The segment covering 52 to 63 has biased composition (acidic residues); that stretch reads DDEDEEDDDADV. Over residues 102–111 the composition is skewed to polar residues; it reads HATSDVSSTA. Residues 196–245 are a coiled coil; the sequence is ELKQLINMSKDRLVDLQDKFEKGVQTSNRIKRNLKMSREKIQFLNDEFRT.

The protein belongs to the KXD1 family. Component of the biogenesis of lysosome-related organelles complex-1 (BLOC-1).

It localises to the endosome. Component of the biogenesis of lysosome-related organelles complex-1 (BLOC-1) involved in endosomal cargo sorting. The chain is Biogenesis of lysosome-related organelles complex 1 subunit KXD1 (KXD1) from Vanderwaltozyma polyspora (strain ATCC 22028 / DSM 70294 / BCRC 21397 / CBS 2163 / NBRC 10782 / NRRL Y-8283 / UCD 57-17) (Kluyveromyces polysporus).